Consider the following 394-residue polypeptide: Elongation factor Tu 2 (394 aa).

The tr-type G domain occupies 9-204; sequence KPHCNIGTIG…SIDDYIPQPT (196 aa). Positions 18 to 25 are G1; the sequence is GHVDHGKT. 18–25 provides a ligand contact to GTP; sequence GHVDHGKT. Mg(2+) is bound at residue Thr25. The segment at 61-65 is G2; that stretch reads GITIQ. Residues 82–85 form a G3 region; sequence DCPG. Residues 82-86 and 137-140 each bind GTP; these read DCPGH and NKID. Residues 137 to 140 are G4; the sequence is NKID. The interval 174–176 is G5; that stretch reads SAL.

The protein belongs to the TRAFAC class translation factor GTPase superfamily. Classic translation factor GTPase family. EF-Tu/EF-1A subfamily. In terms of assembly, monomer.

The protein resides in the cytoplasm. The enzyme catalyses GTP + H2O = GDP + phosphate + H(+). GTP hydrolase that promotes the GTP-dependent binding of aminoacyl-tRNA to the A-site of ribosomes during protein biosynthesis. The chain is Elongation factor Tu 2 from Orientia tsutsugamushi (strain Boryong) (Rickettsia tsutsugamushi).